A 161-amino-acid polypeptide reads, in one-letter code: MSERDAIRAFSHMLETIFVRMRAEGTGSQTDAMQRWLDLYNVGSLPIDKKSYKALRLMDRETTDQQKEDATCAICLDNLQNNVDIPEDHVIKEELKIDPTTFGTTVIVMPCKHRFHYFCLTLWLEAQQTCPTCRQKVKTDKEVEEEERQRNLEELHDSMYG.

The segment at 72-134 adopts an RING-type zinc-finger fold; the sequence is CAICLDNLQN…EAQQTCPTCR (63 aa). Residues 140 to 161 are disordered; the sequence is DKEVEEEERQRNLEELHDSMYG.

This is an uncharacterized protein from Caenorhabditis elegans.